A 166-amino-acid chain; its full sequence is Early E3 18.5 kDa glycoprotein (166 aa).

The first 19 residues, 1-19 (MGPILVLLVLLSLLEAGSA), serve as a signal peptide directing secretion. The Lumenal portion of the chain corresponds to 20 to 131 (NYDPCLDFDP…SKDNIVTFSI (112 aa)). Residue Asn-31 is glycosylated (N-linked (GlcNAc...) asparagine; by host). Intrachain disulfides connect Cys-32–Cys-50 and Cys-44–Cys-106. Asn-63, Asn-67, and Asn-97 each carry an N-linked (GlcNAc...) asparagine; by host glycan. A helical membrane pass occupies residues 132–152 (AYCLCACLLTALLCVCIHLLV). Topologically, residues 153–166 (TTRIKNANNKEKMP) are cytoplasmic. The Di-lysine motif motif lies at 162–166 (KEKMP).

It belongs to the adenoviridae E19 family. In terms of processing, both disulfide bonds are absolutely critical for the interaction with MHC antigens. N-glycosylated; high-mannose.

The protein resides in the host endoplasmic reticulum membrane. Functionally, binds and retains class I heavy chains in the endoplasmic reticulum during the early period of virus infection, thereby impairing their transport to the cell surface. Also delays the expression of class I alleles that it cannot affect by direct retention. Binds transporters associated with antigen processing (TAP) and acts as a tapasin inhibitor, preventing class I/TAP association. In consequence, infected cells are masked for immune recognition by cytotoxic T-lymphocytes. The protein is Early E3 18.5 kDa glycoprotein of Human adenovirus B serotype 11 (strain BC34) (HAdV-11).